The primary structure comprises 311 residues: Small ribosomal subunit biogenesis GTPase RsgA (311 aa).

The CP-type G domain maps to 77–239; it reads LSKQSHIIAT…IIDTPGIKGF (163 aa). Residues 126-129 and 180-188 each bind GTP; these read NKTD and GHSGVGKST. Residues Cys-263, Cys-268, His-270, and Cys-276 each contribute to the Zn(2+) site.

This sequence belongs to the TRAFAC class YlqF/YawG GTPase family. RsgA subfamily. As to quaternary structure, monomer. Associates with 30S ribosomal subunit, binds 16S rRNA. Requires Zn(2+) as cofactor.

It is found in the cytoplasm. One of several proteins that assist in the late maturation steps of the functional core of the 30S ribosomal subunit. Helps release RbfA from mature subunits. May play a role in the assembly of ribosomal proteins into the subunit. Circularly permuted GTPase that catalyzes slow GTP hydrolysis, GTPase activity is stimulated by the 30S ribosomal subunit. The polypeptide is Small ribosomal subunit biogenesis GTPase RsgA (Azobacteroides pseudotrichonymphae genomovar. CFP2).